An 84-amino-acid chain; its full sequence is MTTFEEAAQKVKEFTKKPSNDELLSLYGLYKQGTDGDCNISEPWAVQVEAKAKYNAWNALKGTSKEDAKAKYVALYEQLATKYA.

The region spanning 1-84 is the ACB domain; it reads MTTFEEAAQK…LYEQLATKYA (84 aa). Residues K12, 27-31, K53, and Y72 each bind an acyl-CoA; that span reads YGLYK.

It belongs to the ACBP family. Interacts with dhkA.

Functionally, binds to acyl-CoA. Processed into the SDF-2 (spore differentiation factor 2) a peptide which triggers sporulation. SDF-2 appears to stimulate prestalk cells to release additional SDF-2 by acting through a signal transduction pathway that also involves dhkA, regA and PKA. Induces encapsulation of prespore cells in a dhkA-dependent manner. GABA induces the release of acbA from prespore cells and induces the exposure of tagC on the surface of prestalk cells where it can convert acbA to SDF-2. Glutamate acts as a competitive inhibitor and is also able to inhibit induction of sporulation by SDF-2. This is Acyl-CoA-binding protein (acbA) from Dictyostelium discoideum (Social amoeba).